The following is a 109-amino-acid chain: Flagellar hook-basal body complex protein FliE (109 aa).

The protein belongs to the FliE family.

The protein resides in the bacterial flagellum basal body. This Pseudomonas syringae pv. tomato (strain ATCC BAA-871 / DC3000) protein is Flagellar hook-basal body complex protein FliE.